The primary structure comprises 457 residues: Bifunctional protein GlmU (457 aa).

The interval 1–229 (MYNCAIILAA…YEEIMGVNSR (229 aa)) is pyrophosphorylase. Residues 8-11 (LAAG), Lys-22, Gln-73, and 78-79 (GT) each bind UDP-N-acetyl-alpha-D-glucosamine. Asp-103 provides a ligand contact to Mg(2+). UDP-N-acetyl-alpha-D-glucosamine-binding residues include Gly-140, Glu-155, Asn-170, and Asn-227. Asn-227 provides a ligand contact to Mg(2+). The segment at 230-250 (VQLSEAEIVMRKRINHKHMVN) is linker. Residues 251 to 457 (GVTFIDCEST…WLDKKGLLKK (207 aa)) form an N-acetyltransferase region. Residues Arg-332 and Lys-350 each contribute to the UDP-N-acetyl-alpha-D-glucosamine site. His-362 functions as the Proton acceptor in the catalytic mechanism. The UDP-N-acetyl-alpha-D-glucosamine site is built by Tyr-365 and Asn-376. Acetyl-CoA is bound by residues 385–386 (NY), Ala-422, and Arg-439.

The protein in the N-terminal section; belongs to the N-acetylglucosamine-1-phosphate uridyltransferase family. In the C-terminal section; belongs to the transferase hexapeptide repeat family. In terms of assembly, homotrimer. Requires Mg(2+) as cofactor.

Its subcellular location is the cytoplasm. The enzyme catalyses alpha-D-glucosamine 1-phosphate + acetyl-CoA = N-acetyl-alpha-D-glucosamine 1-phosphate + CoA + H(+). It catalyses the reaction N-acetyl-alpha-D-glucosamine 1-phosphate + UTP + H(+) = UDP-N-acetyl-alpha-D-glucosamine + diphosphate. It participates in nucleotide-sugar biosynthesis; UDP-N-acetyl-alpha-D-glucosamine biosynthesis; N-acetyl-alpha-D-glucosamine 1-phosphate from alpha-D-glucosamine 6-phosphate (route II): step 2/2. It functions in the pathway nucleotide-sugar biosynthesis; UDP-N-acetyl-alpha-D-glucosamine biosynthesis; UDP-N-acetyl-alpha-D-glucosamine from N-acetyl-alpha-D-glucosamine 1-phosphate: step 1/1. Its pathway is bacterial outer membrane biogenesis; LPS lipid A biosynthesis. Catalyzes the last two sequential reactions in the de novo biosynthetic pathway for UDP-N-acetylglucosamine (UDP-GlcNAc). The C-terminal domain catalyzes the transfer of acetyl group from acetyl coenzyme A to glucosamine-1-phosphate (GlcN-1-P) to produce N-acetylglucosamine-1-phosphate (GlcNAc-1-P), which is converted into UDP-GlcNAc by the transfer of uridine 5-monophosphate (from uridine 5-triphosphate), a reaction catalyzed by the N-terminal domain. This Clostridium botulinum (strain Kyoto / Type A2) protein is Bifunctional protein GlmU.